The following is a 340-amino-acid chain: DNA-directed RNA polymerase subunit alpha (340 aa).

The alpha N-terminal domain (alpha-NTD) stretch occupies residues 1–235 (MYRNWTELIK…DQLNPFINFD (235 aa)). Residues 251–340 (WNPNLFRKVD…LSKQFEEENF (90 aa)) are alpha C-terminal domain (alpha-CTD).

This sequence belongs to the RNA polymerase alpha chain family. As to quaternary structure, homodimer. The RNAP catalytic core consists of 2 alpha, 1 beta, 1 beta' and 1 omega subunit. When a sigma factor is associated with the core the holoenzyme is formed, which can initiate transcription.

It carries out the reaction RNA(n) + a ribonucleoside 5'-triphosphate = RNA(n+1) + diphosphate. In terms of biological role, DNA-dependent RNA polymerase catalyzes the transcription of DNA into RNA using the four ribonucleoside triphosphates as substrates. In Magnetococcus marinus (strain ATCC BAA-1437 / JCM 17883 / MC-1), this protein is DNA-directed RNA polymerase subunit alpha.